The primary structure comprises 284 residues: 4-diphosphocytidyl-2-C-methyl-D-erythritol kinase (284 aa).

The active site involves Lys-9. 92–102 (PMGGGIGGGSS) is a binding site for ATP. Asp-134 is a catalytic residue.

This sequence belongs to the GHMP kinase family. IspE subfamily.

The enzyme catalyses 4-CDP-2-C-methyl-D-erythritol + ATP = 4-CDP-2-C-methyl-D-erythritol 2-phosphate + ADP + H(+). The protein operates within isoprenoid biosynthesis; isopentenyl diphosphate biosynthesis via DXP pathway; isopentenyl diphosphate from 1-deoxy-D-xylulose 5-phosphate: step 3/6. In terms of biological role, catalyzes the phosphorylation of the position 2 hydroxy group of 4-diphosphocytidyl-2C-methyl-D-erythritol. This chain is 4-diphosphocytidyl-2-C-methyl-D-erythritol kinase, found in Stutzerimonas stutzeri (strain A1501) (Pseudomonas stutzeri).